We begin with the raw amino-acid sequence, 217 residues long: 3-isopropylmalate dehydratase small subunit (217 aa).

It belongs to the LeuD family. LeuD type 1 subfamily. In terms of assembly, heterodimer of LeuC and LeuD.

The enzyme catalyses (2R,3S)-3-isopropylmalate = (2S)-2-isopropylmalate. It participates in amino-acid biosynthesis; L-leucine biosynthesis; L-leucine from 3-methyl-2-oxobutanoate: step 2/4. Catalyzes the isomerization between 2-isopropylmalate and 3-isopropylmalate, via the formation of 2-isopropylmaleate. This Paraburkholderia phymatum (strain DSM 17167 / CIP 108236 / LMG 21445 / STM815) (Burkholderia phymatum) protein is 3-isopropylmalate dehydratase small subunit.